The primary structure comprises 149 residues: MFHEIVVLLFIFLIALIGKNDLVATAGALLFVMKFSPLSNVFPFLTERGIELGILLLTLSVLTPFAAGDIMPRDLLSTLKSPAGLIAVFSGIVASYLTGHGVELLRSRPEVMVGLIVGSIIGASFLKGVPAGPLVAAGLAAVLIKSLNL.

Helical transmembrane passes span 5–25 (IVVLLFIFLIALIGKNDLVAT), 52–72 (LGILLLTLSVLTPFAAGDIMP), 85–105 (LIAVFSGIVASYLTGHGVELL), and 111–131 (VMVGLIVGSIIGASFLKGVPA).

It belongs to the UPF0756 family.

The protein localises to the cell membrane. The chain is UPF0756 membrane protein Nther_1957 from Natranaerobius thermophilus (strain ATCC BAA-1301 / DSM 18059 / JW/NM-WN-LF).